The chain runs to 436 residues: 3-ketoacyl-CoA thiolase (436 aa).

C99 acts as the Acyl-thioester intermediate in catalysis. Residues H392 and C422 each act as proton acceptor in the active site.

Belongs to the thiolase-like superfamily. Thiolase family. In terms of assembly, heterotetramer of two alpha chains (FadJ) and two beta chains (FadI).

Its subcellular location is the cytoplasm. The catalysed reaction is an acyl-CoA + acetyl-CoA = a 3-oxoacyl-CoA + CoA. Its pathway is lipid metabolism; fatty acid beta-oxidation. Catalyzes the final step of fatty acid oxidation in which acetyl-CoA is released and the CoA ester of a fatty acid two carbons shorter is formed. The protein is 3-ketoacyl-CoA thiolase of Shewanella loihica (strain ATCC BAA-1088 / PV-4).